Consider the following 314-residue polypeptide: Very long chain fatty acid elongase 4 (314 aa).

N-linked (GlcNAc...) asparagine glycosylation occurs at N20. 7 consecutive transmembrane segments (helical) span residues 42–62 (LMQS…FVWL), 78–98 (VLII…RELF), 127–147 (ALWW…FFIL), 165–185 (MFTL…FFGA), 188–208 (NSFI…GPWI), 217–237 (YLTM…ALSL), and 247–267 (MHWA…NFYI). A disordered region spans residues 275–314 (KPKAGKTAMNGISANGVSKSEKQLMIENGKKQKNGKAKGD). Residues 293 to 304 (KSEKQLMIENGK) show a composition bias toward basic and acidic residues. The segment covering 305-314 (KQKNGKAKGD) has biased composition (basic residues). Positions 310-314 (KAKGD) match the Di-lysine motif motif.

It belongs to the ELO family. ELOVL4 subfamily. Oligomer. In terms of processing, N-glycosylated. Expressed in the retina and at much lower level in the brain. Ubiquitous, highest expression in thymus, followed by testis, small intestine, ovary, and prostate. Little or no expression in heart, lung, liver, or leukocates.

The protein localises to the endoplasmic reticulum membrane. The catalysed reaction is a very-long-chain acyl-CoA + malonyl-CoA + H(+) = a very-long-chain 3-oxoacyl-CoA + CO2 + CoA. The enzyme catalyses tetracosanoyl-CoA + malonyl-CoA + H(+) = 3-oxohexacosanoyl-CoA + CO2 + CoA. It carries out the reaction hexacosanoyl-CoA + malonyl-CoA + H(+) = 3-oxooctacosanyol-CoA + CO2 + CoA. It catalyses the reaction octacosanoyl-CoA + malonyl-CoA + H(+) = 3-oxo-triacontanoyl-CoA + CO2 + CoA. The catalysed reaction is triacontanoyl-CoA + malonyl-CoA + H(+) = 3-oxo-dotriacontanoyl-CoA + CO2 + CoA. The enzyme catalyses (19Z,22Z,25Z,28Z,31Z)-tetratriacontapentaenoyl-CoA + malonyl-CoA + H(+) = 3-oxo-(21Z,24Z,27Z,30Z,33Z)-hexatriacontapentaenoyl-CoA + CO2 + CoA. It carries out the reaction (4Z,7Z,10Z,13Z,16Z,19Z)-docosahexaenoyl-CoA + malonyl-CoA + H(+) = 3-oxo-(6Z,9Z,12Z,15Z,18Z,21Z)-tetracosahexaenoyl-CoA + CO2 + CoA. It catalyses the reaction (7Z,10Z,13Z,16Z)-docosatetraenoyl-CoA + malonyl-CoA + H(+) = (9Z,12Z,15Z,18Z)-3-oxotetracosatetraenoyl-CoA + CO2 + CoA. The catalysed reaction is (11Z,14Z,17Z,20Z,23Z)-hexacosapentaenoyl-CoA + malonyl-CoA + H(+) = 3-oxo-(13Z,16Z,19Z,22Z,25Z)-octacosapentaenoyl-CoA + CO2 + CoA. The enzyme catalyses (13Z,16Z,19Z,22Z,25Z)-octacosapentaenoyl-CoA + malonyl-CoA + H(+) = 3-oxo-(15Z,18Z,21Z,24Z,27Z)-triacontapentaenoyl-CoA + CO2 + CoA. It carries out the reaction (15Z,18Z,21Z,24Z,27Z)-triacontapentaenoyl-CoA + malonyl-CoA + H(+) = 3-oxo-(17Z,20Z,23Z,26Z,29Z)-dotriacontapentaenoyl-CoA + CO2 + CoA. It catalyses the reaction (17Z,20Z,23Z,26Z,29Z)-dotriacontapentaenoyl-CoA + malonyl-CoA + H(+) = 3-oxo-(19Z,22Z,25Z,28Z,31Z)-tetratriacontapentaenoyl-CoA + CO2 + CoA. The catalysed reaction is (21Z,24Z,27Z,30Z,33Z)-hexatriacontapentaenoyl-CoA + malonyl-CoA + H(+) = 3-oxo-(23Z,26Z,29Z,32Z,35Z)-octatriacontapentaenoyl-CoA + CO2 + CoA. The enzyme catalyses (11Z,14Z,17Z,20Z)-hexacosatetraenoyl-CoA + malonyl-CoA + H(+) = (13Z,16Z,19Z,22Z)-3-oxooctacosatetraenoyl-CoA + CO2 + CoA. It carries out the reaction (13Z,16Z,19Z,22Z)-octacosatetraenoyl-CoA + malonyl-CoA + H(+) = 3-oxo-(15Z,18Z,21Z,24Z)-triacontatetraenoyl-CoA + CO2 + CoA. It catalyses the reaction (15Z,18Z,21Z,24Z)-triacontatetraenoyl-CoA + malonyl-CoA + H(+) = 3-oxo-(17Z,20Z,23Z,26Z)-dotriacontatetraenoyl-CoA + CO2 + CoA. The catalysed reaction is (17Z,20Z,23Z,26Z)-dotriacontatetraenoyl-CoA + malonyl-CoA + H(+) = 3-oxo-(19Z,22Z,25Z,28Z)-tetratriacontatetraenoyl-CoA + CO2 + CoA. The enzyme catalyses (19Z,22Z,25Z,28Z)-tetratriacontatetraenoyl-CoA + malonyl-CoA + H(+) = 3-oxo-(21Z,24Z,27Z,30Z)-hexatriacontatetraenoyl-CoA + CO2 + CoA. It carries out the reaction (21Z,24Z,27Z,30Z)-hexatriacontatetraenoyl-CoA + malonyl-CoA + H(+) = 3-oxo-(23Z,26Z,29Z,32Z)-octatriacontatetraenoyl-CoA + CO2 + CoA. It catalyses the reaction (6Z,9Z,12Z,15Z,18Z,21Z)-tetracosahexaenoyl-CoA + malonyl-CoA + H(+) = 3-oxo-(8Z,11Z,14Z,17Z,20Z,23Z)-hexacosahexaenoyl-CoA + CO2 + CoA. The catalysed reaction is (8Z,11Z,14Z,17Z,20Z,23Z)-hexacosahexaenoyl-CoA + malonyl-CoA + H(+) = 3-oxo-(10Z,13Z,16Z,19Z,22Z,25Z)-octacosahexaenoyl-CoA + CO2 + CoA. The enzyme catalyses (10Z,13Z,16Z,19Z,22Z,25Z)-octacosahexaenoyl-CoA + malonyl-CoA + H(+) = 3-oxo-(12Z,15Z,18Z,21Z,24Z,27Z)-triacontahexaenoyl-CoA + CO2 + CoA. It carries out the reaction (12Z,15Z,18Z,21Z,24Z,27Z)-triacontahexaenoyl-CoA + malonyl-CoA + H(+) = 3-oxo-(14Z,17Z,20Z,23Z,26Z,29Z)-dotriacontahexaenoyl-CoA + CO2 + CoA. It catalyses the reaction (14Z,17Z,20Z,23Z,26Z,29Z)-dotriacontahexaenoyl-CoA + malonyl-CoA + H(+) = 3-oxo-(16Z,19Z,22Z,25Z,28Z,31Z)-tetratriacontahexaenoyl-CoA + CO2 + CoA. The catalysed reaction is (16Z,19Z,22Z,25Z,28Z,31Z)-tetratriacontahexaenoyl-CoA + malonyl-CoA + H(+) = 3-oxo-(18Z,21Z,24Z,27Z,30Z,33Z)-hexatriacontahexaenoyl-CoA + CO2 + CoA. The enzyme catalyses (9Z,12Z,15Z,18Z,21Z)-tetracosapentaenoyl-CoA + malonyl-CoA + H(+) = 3-oxo-(11Z,14Z,17Z,20Z,23Z)-hexacosapentaenoyl-CoA + CO2 + CoA. Its pathway is lipid metabolism; fatty acid biosynthesis. In terms of biological role, catalyzes the first and rate-limiting reaction of the four reactions that constitute the long-chain fatty acids elongation cycle. This endoplasmic reticulum-bound enzymatic process allows the addition of 2 carbons to the chain of long- and very long-chain fatty acids (VLCFAs) per cycle. Condensing enzyme that catalyzes the synthesis of very long chain saturated (VLC-SFA) and polyunsaturated (PUFA) fatty acids that are involved in multiple biological processes as precursors of membrane lipids and lipid mediators. May play a critical role in early brain and skin development. The sequence is that of Very long chain fatty acid elongase 4 from Homo sapiens (Human).